Consider the following 152-residue polypeptide: Transcriptional regulator MraZ (152 aa).

SpoVT-AbrB domains are found at residues 5–51 (VNSI…PLPE) and 80–123 (AAEC…DEVL).

Belongs to the MraZ family. Forms oligomers.

The protein localises to the cytoplasm. It is found in the nucleoid. The polypeptide is Transcriptional regulator MraZ (Methylococcus capsulatus (strain ATCC 33009 / NCIMB 11132 / Bath)).